The following is a 737-amino-acid chain: Transcription termination factor Rho (737 aa).

The disordered stretch occupies residues 1–396 (MSGPCSAHRV…ENSYLPDPTD (396 aa)). Low complexity-rich tracts occupy residues 16–28 (RPTI…TRSS), 62–86 (ASRA…GSDA), and 101–111 (DAESAPTAADT). Basic and acidic residues-rich tracts occupy residues 145–175 (PRAE…HESR), 196–256 (SMER…DRRD), 266–279 (GRPD…DRHQ), and 286–324 (DRSH…DRGG). Residues 328-339 (RNGRRGRNRFRR) show a composition bias toward basic residues. The segment covering 347–360 (APISGSHAPSQGSP) has biased composition (polar residues). A Rho RNA-BD domain is found at 367–439 (EGTMAGWFDP…IEVQTLNDGS (73 aa)). Positions 376–387 (PSRDGGFLRRPE) are enriched in basic and acidic residues. ATP is bound by residues 487–492 (GYGQRA), 499–504 (RAGKTT), and R530.

This sequence belongs to the Rho family. Homohexamer. The homohexamer assembles into an open ring structure.

Functionally, facilitates transcription termination by a mechanism that involves Rho binding to the nascent RNA, activation of Rho's RNA-dependent ATPase activity, and release of the mRNA from the DNA template. In Gemmatimonas aurantiaca (strain DSM 14586 / JCM 11422 / NBRC 100505 / T-27), this protein is Transcription termination factor Rho.